Here is a 589-residue protein sequence, read N- to C-terminus: ATP-dependent lipid A-core flippase (589 aa).

Helical transmembrane passes span 29–49, 70–90, 157–177, 261–281, and 283–303; these read LLLV…TGFL, WLPV…YITD, VIGA…TILV, MIGA…ALAG, and LTAG…PGLK. Residues 32–314 form the ABC transmembrane type-1 domain; that stretch reads VAALIAALIE…LTNVQNMVQR (283 aa). The 237-residue stretch at 346–582 folds into the ABC transporter domain; sequence IEFRDVTARY…GGLYSHLHGM (237 aa). 380–387 lines the ATP pocket; it reads GRSGSGKS.

The protein belongs to the ABC transporter superfamily. Lipid exporter (TC 3.A.1.106) family. Homodimer.

The protein resides in the cell inner membrane. The catalysed reaction is ATP + H2O + lipid A-core oligosaccharideSide 1 = ADP + phosphate + lipid A-core oligosaccharideSide 2.. In terms of biological role, involved in lipopolysaccharide (LPS) biosynthesis. Translocates lipid A-core from the inner to the outer leaflet of the inner membrane. Transmembrane domains (TMD) form a pore in the inner membrane and the ATP-binding domain (NBD) is responsible for energy generation. This chain is ATP-dependent lipid A-core flippase, found in Xanthomonas euvesicatoria pv. vesicatoria (strain 85-10) (Xanthomonas campestris pv. vesicatoria).